Here is a 119-residue protein sequence, read N- to C-terminus: Ribonuclease P protein component (119 aa).

The protein belongs to the RnpA family. In terms of assembly, consists of a catalytic RNA component (M1 or rnpB) and a protein subunit.

The enzyme catalyses Endonucleolytic cleavage of RNA, removing 5'-extranucleotides from tRNA precursor.. RNaseP catalyzes the removal of the 5'-leader sequence from pre-tRNA to produce the mature 5'-terminus. It can also cleave other RNA substrates such as 4.5S RNA. The protein component plays an auxiliary but essential role in vivo by binding to the 5'-leader sequence and broadening the substrate specificity of the ribozyme. The chain is Ribonuclease P protein component from Pasteurella multocida (strain Pm70).